We begin with the raw amino-acid sequence, 64 residues long: Defensin-like protein 123 (64 aa).

Disulfide bonds link C19-C62, C29-C49, C34-C56, and C38-C58.

This sequence belongs to the DEFL family.

The protein is Defensin-like protein 123 of Arabidopsis thaliana (Mouse-ear cress).